The sequence spans 500 residues: Enolase (500 aa).

Residues His-225 and Glu-234 each contribute to the substrate site. Glu-277 serves as the catalytic Proton donor. Residues Asp-312, Glu-361, and Asp-386 each contribute to the Mg(2+) site. Positions 361 and 386 each coordinate substrate. The active-site Proton acceptor is Lys-411. Substrate is bound by residues 438–441 (SHRS) and Lys-462.

It belongs to the enolase family. Homodimer. Mg(2+) is required as a cofactor.

It is found in the cytoplasm. The enzyme catalyses (2R)-2-phosphoglycerate = phosphoenolpyruvate + H2O. It participates in carbohydrate degradation; glycolysis; pyruvate from D-glyceraldehyde 3-phosphate: step 4/5. Enzyme of the glycolytic pathway. Glycolysis is essential in glial cells but not in neurons; neurons rely on the citric acid cycle for their energy needs, and on lactate and alanine secreted into the hemolymph by glial cells to fuel it. The chain is Enolase from Drosophila melanogaster (Fruit fly).